Reading from the N-terminus, the 295-residue chain is Pyridoxal 5'-phosphate synthase subunit PdxS (295 aa).

Asp23 contacts D-ribose 5-phosphate. Residue Lys80 is the Schiff-base intermediate with D-ribose 5-phosphate of the active site. Gly152 is a binding site for D-ribose 5-phosphate. Position 164 (Arg164) interacts with D-glyceraldehyde 3-phosphate. D-ribose 5-phosphate-binding positions include Gly213 and 234–235; that span reads GS.

This sequence belongs to the PdxS/SNZ family. In the presence of PdxT, forms a dodecamer of heterodimers.

The enzyme catalyses aldehydo-D-ribose 5-phosphate + D-glyceraldehyde 3-phosphate + L-glutamine = pyridoxal 5'-phosphate + L-glutamate + phosphate + 3 H2O + H(+). It functions in the pathway cofactor biosynthesis; pyridoxal 5'-phosphate biosynthesis. Functionally, catalyzes the formation of pyridoxal 5'-phosphate from ribose 5-phosphate (RBP), glyceraldehyde 3-phosphate (G3P) and ammonia. The ammonia is provided by the PdxT subunit. Can also use ribulose 5-phosphate and dihydroxyacetone phosphate as substrates, resulting from enzyme-catalyzed isomerization of RBP and G3P, respectively. The sequence is that of Pyridoxal 5'-phosphate synthase subunit PdxS from Methanopyrus kandleri (strain AV19 / DSM 6324 / JCM 9639 / NBRC 100938).